The chain runs to 387 residues: Succinate--CoA ligase [ADP-forming] subunit beta (387 aa).

One can recognise an ATP-grasp domain in the interval 9-244 (KAIFADNGIP…ITEENPAERE (236 aa)). ATP-binding positions include lysine 46, 53 to 55 (GRG), glutamate 99, alanine 102, and glutamate 107. Mg(2+) is bound by residues asparagine 199 and aspartate 213. Residues asparagine 264 and 321–323 (GIV) each bind substrate.

The protein belongs to the succinate/malate CoA ligase beta subunit family. Heterotetramer of two alpha and two beta subunits. Mg(2+) is required as a cofactor.

The enzyme catalyses succinate + ATP + CoA = succinyl-CoA + ADP + phosphate. It carries out the reaction GTP + succinate + CoA = succinyl-CoA + GDP + phosphate. It functions in the pathway carbohydrate metabolism; tricarboxylic acid cycle; succinate from succinyl-CoA (ligase route): step 1/1. Its function is as follows. Succinyl-CoA synthetase functions in the citric acid cycle (TCA), coupling the hydrolysis of succinyl-CoA to the synthesis of either ATP or GTP and thus represents the only step of substrate-level phosphorylation in the TCA. The beta subunit provides nucleotide specificity of the enzyme and binds the substrate succinate, while the binding sites for coenzyme A and phosphate are found in the alpha subunit. The protein is Succinate--CoA ligase [ADP-forming] subunit beta of Campylobacter jejuni subsp. jejuni serotype O:6 (strain 81116 / NCTC 11828).